The primary structure comprises 112 residues: Putative pterin-4-alpha-carbinolamine dehydratase (112 aa).

This sequence belongs to the pterin-4-alpha-carbinolamine dehydratase family.

The catalysed reaction is (4aS,6R)-4a-hydroxy-L-erythro-5,6,7,8-tetrahydrobiopterin = (6R)-L-erythro-6,7-dihydrobiopterin + H2O. The polypeptide is Putative pterin-4-alpha-carbinolamine dehydratase (Shewanella halifaxensis (strain HAW-EB4)).